A 640-amino-acid polypeptide reads, in one-letter code: MGCGSSSKKGKKSEKVVRAALIIQNWYRRYRARLSARQHYALAIFQSIEYADEQGQMQLSSFFSFMLENYTNTHKEDSALVSRLFENTRLESKDREEYVGLIDVPDSYDGPRLQFPLTFTDINLLLQAFKQQQTLHAHYVLEVLFEARKILKQMPNFTRIQTFPAKEITICGDLHGKLDDLMLIFYKNGLPSEKNPYVFNGDFVDRGNNSMEILMILLVSFLVYPTDLHLNRGNHEDFMMNLRYGFTKEILQKYKLHGKKILQVLEELYTWLPIGTIIDNEILVIHGGISESTDLNILQQLQRNKMKSVLMPPMSTNQECNIKKNKAGPSEQSASEQLTKLEWEQIIDLLWSDPRGKKGCYPNTSRGGGCYFGPDVTSKVLNKNQLKMVIRSHECKPDGYEICHDGKVITVFSASNYYEEGSNRGAYIRLSYGTSPQFFQYQVTSTSCLNPLYQRVNAMEFSAFRILKERMIARKTDLINAFELRDHSRTGKISLAQWAFSMESILGLNLPWRSLSSHLVSTDSSGSVDYMSSFDDIHIEKPMKDMKSDLIETMYRYRSDLKIIFNIIDTDQSGLISMDEFRTMWKLFNAHYKVHIDDSQIDELASTMDSNKDGNIDFNEFLRAFYVVHKYETPESPLNK.

The 30-residue stretch at 16–45 folds into the IQ domain; sequence VVRAALIIQNWYRRYRARLSARQHYALAIF. Residues 122 to 445 form a catalytic region; sequence INLLLQAFKQ…PQFFQYQVTS (324 aa). 4 residues coordinate Mn(2+): Asp-173, His-175, Asp-202, and Asn-234. His-235 acts as the Proton donor in catalysis. His-286 and His-393 together coordinate Mn(2+). EF-hand domains lie at 473–508, 556–591, and 596–631; these read ARKT…ILGL, RYRS…FNAH, and IDDS…VHKY. Asp-569, Asp-571, Ser-573, Glu-580, Asp-609, Asn-611, Asp-613, Asn-615, and Glu-620 together coordinate Ca(2+).

The protein belongs to the PPP phosphatase family. The cofactor is Mn(2+). It depends on Mg(2+) as a cofactor.

It catalyses the reaction O-phospho-L-seryl-[protein] + H2O = L-seryl-[protein] + phosphate. The catalysed reaction is O-phospho-L-threonyl-[protein] + H2O = L-threonyl-[protein] + phosphate. Activated by calcium. May have a role in the recovery or adaptation response of photoreceptors. May have a role in development. This is Serine/threonine-protein phosphatase with EF-hands 1 (Ppef1) from Rattus norvegicus (Rat).